The sequence spans 429 residues: Histidine--tRNA ligase (429 aa).

Belongs to the class-II aminoacyl-tRNA synthetase family. Homodimer.

It localises to the cytoplasm. The catalysed reaction is tRNA(His) + L-histidine + ATP = L-histidyl-tRNA(His) + AMP + diphosphate + H(+). The protein is Histidine--tRNA ligase of Pseudomonas paraeruginosa (strain DSM 24068 / PA7) (Pseudomonas aeruginosa (strain PA7)).